Reading from the N-terminus, the 129-residue chain is UPF0047 protein Mb2586c (129 aa).

It belongs to the UPF0047 family.

The polypeptide is UPF0047 protein Mb2586c (Mycobacterium bovis (strain ATCC BAA-935 / AF2122/97)).